We begin with the raw amino-acid sequence, 263 residues long: Uroplakin-3b-like protein 1 (263 aa).

An N-terminal signal peptide occupies residues 1 to 33; that stretch reads MDNSWRLGPAIGLSAGQSQLLVSLLLLLTRVQP. The Extracellular segment spans residues 34 to 204; it reads GTDVAAPEHI…PGPQSPGTVV (171 aa). Residues N51, N76, and N91 are each glycosylated (N-linked (GlcNAc...) asparagine). Residues 205 to 225 traverse the membrane as a helical segment; sequence IIAILSILLAVLLTVLLAVLI. Over 226–263 the chain is Cytoplasmic; the sequence is YTCFNSCRSTSLSGPEEAGSVRRYTTHLAFSTPAEGAS.

This sequence belongs to the uroplakin-3 family.

It localises to the membrane. The sequence is that of Uroplakin-3b-like protein 1 from Homo sapiens (Human).